Consider the following 164-residue polypeptide: V-type proton ATPase subunit c' (164 aa).

Topologically, residues 1–16 (MDMVASDNVYAPLYAP) are lumenal. A helical transmembrane segment spans residues 17 to 37 (FFGFAGCALAMILSCLGAAIG). Over 38–59 (TAKSGIGIAGIGTFKPELIMKS) the chain is Cytoplasmic. The helical transmembrane segment at 60–80 (LIPVVMSGILAIYGLVVAVLI) threads the bilayer. Topologically, residues 81–98 (AGNLSPTEEYTLFNGFMH) are lumenal. A helical transmembrane segment spans residues 99–119 (LSCGLCVGFACLSSGYAIGIV). Residues 120 to 136 (GDVGVRKYMHQPRLFVG) are Cytoplasmic-facing. The helical transmembrane segment at 137-157 (IVLILIFSEVLGLYGMIIALI) threads the bilayer. Over 158 to 164 (LNTKGSE) the chain is Lumenal.

It belongs to the V-ATPase proteolipid subunit family. V-ATPase is a heteromultimeric enzyme composed of a peripheral catalytic V1 complex (components A to H) attached to an integral membrane V0 proton pore complex (components: a, c, c', c'', d, e, f and VOA1). The decameric c-ring forms the proton-conducting pore, and is composed of eight proteolipid subunits c, one subunit c' and one subunit c''.

The protein localises to the vacuole membrane. Its function is as follows. Proton-conducting pore forming subunit of the V0 complex of vacuolar(H+)-ATPase (V-ATPase), a multisubunit enzyme composed of a peripheral complex (V1) that hydrolyzes ATP and a membrane integral complex (V0) that translocates protons. V-ATPase is responsible for acidifying and maintaining the pH of intracellular compartments. This is V-type proton ATPase subunit c' (VMA11) from Candida glabrata (strain ATCC 2001 / BCRC 20586 / JCM 3761 / NBRC 0622 / NRRL Y-65 / CBS 138) (Yeast).